We begin with the raw amino-acid sequence, 148 residues long: Large ribosomal subunit protein uL15 (148 aa).

The segment covering 1-30 has biased composition (basic residues); the sequence is MPSRLRKTRKLRGHVSHGHGRIGKHRKHPG. The segment at 1–39 is disordered; that stretch reads MPSRLRKTRKLRGHVSHGHGRIGKHRKHPGGRGNAGGLH. H39 is modified ((3S)-3-hydroxyhistidine). Residues K47 and K55 each carry the N6-acetyllysine modification. S68 is subject to Phosphoserine. K110 is subject to N6-acetyllysine.

This sequence belongs to the universal ribosomal protein uL15 family. As to quaternary structure, component of the large ribosomal subunit. Hydroxylated on His-39 by MINA.

It is found in the cytoplasm. In terms of biological role, component of the large ribosomal subunit. The ribosome is a large ribonucleoprotein complex responsible for the synthesis of proteins in the cell. The polypeptide is Large ribosomal subunit protein uL15 (RPL27A) (Macaca fascicularis (Crab-eating macaque)).